Reading from the N-terminus, the 120-residue chain is Small ribosomal subunit protein uS13 (120 aa).

The segment at 92–120 (HRKGLPVRGQTTKNNARTRKGKKKTVGSK) is disordered. Positions 107-120 (ARTRKGKKKTVGSK) are enriched in basic residues.

This sequence belongs to the universal ribosomal protein uS13 family. In terms of assembly, part of the 30S ribosomal subunit. Forms a loose heterodimer with protein S19. Forms two bridges to the 50S subunit in the 70S ribosome.

Functionally, located at the top of the head of the 30S subunit, it contacts several helices of the 16S rRNA. In the 70S ribosome it contacts the 23S rRNA (bridge B1a) and protein L5 of the 50S subunit (bridge B1b), connecting the 2 subunits; these bridges are implicated in subunit movement. Contacts the tRNAs in the A and P-sites. This Helicobacter pylori (strain J99 / ATCC 700824) (Campylobacter pylori J99) protein is Small ribosomal subunit protein uS13.